A 282-amino-acid polypeptide reads, in one-letter code: 3-methyl-2-oxobutanoate hydroxymethyltransferase (282 aa).

Residues D45 and D84 each contribute to the Mg(2+) site. 3-methyl-2-oxobutanoate-binding positions include 45-46 (DS), D84, and K114. Residue E116 coordinates Mg(2+). E183 acts as the Proton acceptor in catalysis.

It belongs to the PanB family. As to quaternary structure, homodecamer; pentamer of dimers. Mg(2+) is required as a cofactor.

The protein resides in the cytoplasm. The enzyme catalyses 3-methyl-2-oxobutanoate + (6R)-5,10-methylene-5,6,7,8-tetrahydrofolate + H2O = 2-dehydropantoate + (6S)-5,6,7,8-tetrahydrofolate. It functions in the pathway cofactor biosynthesis; (R)-pantothenate biosynthesis; (R)-pantoate from 3-methyl-2-oxobutanoate: step 1/2. Functionally, catalyzes the reversible reaction in which hydroxymethyl group from 5,10-methylenetetrahydrofolate is transferred onto alpha-ketoisovalerate to form ketopantoate. The sequence is that of 3-methyl-2-oxobutanoate hydroxymethyltransferase from Syntrophobacter fumaroxidans (strain DSM 10017 / MPOB).